The sequence spans 308 residues: HPr kinase/phosphorylase (308 aa).

Active-site residues include His-141 and Lys-162. Position 156–163 (156–163 (GKSGVGKS)) interacts with ATP. Mg(2+) is bound at residue Ser-163. Asp-180 functions as the Proton acceptor; for phosphorylation activity. Proton donor; for dephosphorylation activity in the catalytic mechanism. Residues 204–213 (MEIRGVGILD) are important for the catalytic mechanism of both phosphorylation and dephosphorylation. Glu-205 is a Mg(2+) binding site. Arg-246 is an active-site residue. An important for the catalytic mechanism of dephosphorylation region spans residues 267–272 (PVKPGR).

Belongs to the HPrK/P family. Homohexamer. Mg(2+) is required as a cofactor.

The enzyme catalyses [HPr protein]-L-serine + ATP = [HPr protein]-O-phospho-L-serine + ADP + H(+). It carries out the reaction [HPr protein]-O-phospho-L-serine + phosphate + H(+) = [HPr protein]-L-serine + diphosphate. In terms of biological role, catalyzes the ATP- as well as the pyrophosphate-dependent phosphorylation of a specific serine residue in HPr, a phosphocarrier protein of the phosphoenolpyruvate-dependent sugar phosphotransferase system (PTS). HprK/P also catalyzes the pyrophosphate-producing, inorganic phosphate-dependent dephosphorylation (phosphorolysis) of seryl-phosphorylated HPr (P-Ser-HPr). The two antagonistic activities of HprK/P are regulated by several intracellular metabolites, which change their concentration in response to the absence or presence of rapidly metabolisable carbon sources (glucose, fructose, etc.) in the growth medium. Therefore, by controlling the phosphorylation state of HPr, HPrK/P is a sensor enzyme that plays a major role in the regulation of carbon metabolism and sugar transport: it mediates carbon catabolite repression (CCR), and regulates PTS-catalyzed carbohydrate uptake and inducer exclusion. The sequence is that of HPr kinase/phosphorylase from Peptoclostridium acidaminophilum (Eubacterium acidaminophilum).